We begin with the raw amino-acid sequence, 89 residues long: UPF0335 protein RPC_3979 (89 aa).

Belongs to the UPF0335 family.

The sequence is that of UPF0335 protein RPC_3979 from Rhodopseudomonas palustris (strain BisB18).